The chain runs to 220 residues: 5'(3')-deoxyribonucleotidase, mitochondrial (220 aa).

A mitochondrion-targeting transit peptide spans 1 to 23 (MHRLRGCCARPRGAPLRAERSRA). Asp33 functions as the Nucleophile in the catalytic mechanism. Mg(2+) contacts are provided by Asp33 and Asp35. Residue Asp35 is the Proton donor of the active site. Residues Asp35, Phe41, Phe67, Trp68, Val69, Trp88, Thr122, and Lys157 each contribute to the substrate site. Asp168 contacts Mg(2+).

Belongs to the 5'(3')-deoxyribonucleotidase family. As to quaternary structure, homodimer. The cofactor is Mg(2+).

The protein localises to the mitochondrion. Its function is as follows. Dephosphorylates specifically the 5' and 2'(3')-phosphates of uracil and thymine deoxyribonucleotides, and so protects mitochondrial DNA replication from excess dTTP. Has only marginal activity towards dIMP and dGMP. In Mus musculus (Mouse), this protein is 5'(3')-deoxyribonucleotidase, mitochondrial (Nt5m).